Reading from the N-terminus, the 817-residue chain is MPNSNVRIPPTVPSKIIDVVDQALRARLLGGSTFNSGFDSLDSVLNLQFRLHYHVIGSNGPAKPVCDVLLKESQNLEKNMSMMEELNDYPEITKLVEKILFNCLGILFFHRGQFQESQRCLLHSLKIHNNTASQKTALMEQYDRYLIVENLYYRGLVSQDINIMQNVFYKELLAHVDTIPPESNGLLFEYISLIVAKLRFNQIQDLAENFKTTVENPFILFLYMIKKFQSPLKKHIDNDDLYLKFGQNVLLKAKFPTASETNDEALEHFNVFLQYYFKFTHIKKIKVNPSWYNFIISSMEKTFQSIEVSKTAMFLFQNLSDNSNDEIKKKTFKRESILNFVNFVKYNDKYYQLHDNSHRDIISFIDAYSFILQNSSKTDSIENVFDYDNTVSTFATSLNSFYKEYNLPLMSQSESLDWLENSTRCVYPGNISKVLTNAWSTLYEIRKYQLDFLVSNNLTSYLCNAMMLSTKEKDNADVEEQEEGEEEKALRELQFKYSYTLAQQRHIETAIKTLESLILSKNPNYYKAWHLLALCRSVQEDKEMSYKIVCSVLEAMNESLQNNTLLLNDRWQFIHLKLTQLALIEEIFGTLEALETLPEVFELYATLFPDSQPELNSMGPKYSQTKEYLLQMVWIFAANMYMRTKDNDEDAKAAIKEASNVESKFKNLNCNIANGYLSIIKDEPGVALKEFETVLYYDENNLDALVGFAELIFPEELGVEETNLERYYTLSLDKKPGKRAKLTFVNDTDRSAAYARLKFLLECAILESIEAYYSPEVWWYLSLIYEKYQDDEYKNSLLKCIKYQELNPIRSLRYCNY.

This sequence belongs to the YPP1 family. Interacts with ribosomes.

It localises to the cytoplasmic granule. The protein localises to the cell membrane. Its function is as follows. Involved in endocytosis. The protein is Cargo-transport protein YPP1 (YPP1) of Saccharomyces cerevisiae (strain ATCC 204508 / S288c) (Baker's yeast).